The chain runs to 354 residues: CCN family member 3 (354 aa).

Positions 1–21 are cleaved as a signal peptide; that stretch reads MSLFLRKRCLCLGFLLFHLLS. The 75-residue stretch at 25-99 folds into the IGFBP N-terminal domain; it reads ASLRCPSRCP…NNQTGICMVP (75 aa). Intrachain disulfides connect Cys-29–Cys-55, Cys-33–Cys-57, Cys-37–Cys-58, Cys-44–Cys-61, Cys-69–Cys-83, and Cys-75–Cys-96. Asn-91 carries N-linked (GlcNAc...) asparagine glycosylation. The VWFC domain maps to 102 to 168; it reads DNCVFDGVIY…GECCEKWTCG (67 aa). A TSP type-1 domain is found at 202 to 247; that stretch reads NCIEQTTEWSACSKSCGMGVSTRVTNRNRQCEMVKQTRLCIVRPCE. Cys-241 carries S-palmitoyl cysteine lipidation. Disulfide bonds link Cys-261–Cys-298, Cys-278–Cys-312, Cys-289–Cys-328, Cys-292–Cys-330, and Cys-297–Cys-334. The CTCK domain maps to 261-335; sequence CLRTKKSLKA…GTCTCYSNCP (75 aa). A glycan (N-linked (GlcNAc...) asparagine) is linked at Asn-277.

It belongs to the CCN family. In terms of assembly, interacts with FBLN1. Interacts (via CTCK domain) with NOTCH1 (via the EGF-like repeat region). Interacts with GJA1/CX43. Interacts with ITGA5:ITGB1, ITGAV:ITGB3 and ITGAV:ITGB5. Interacts with ZDHHC22; the interaction may lead to CCN3 palmitoylation. In terms of processing, may be palmitoylated on Cys-241, which is important for extracellular secretion. As to expression, expressed in large vessels including the ascending aorta, carotid arteries, and the thoracic aorta, in medium-sized vessels such as coronary arteries and small pulmonary veins and also in small vessels. In addition, also found to be present in the heart (at protein level). Expressed in astrocytes (at protein level). Detected in brain, bone, lung and muscle tissues. Expressed in skin, expression highly increases 5 days post-wounding, peaking on the 7th day to decline after 9 days. Expressed in pancreatic ducts and beta-cell islets. Expressed in the brain, in arcuate nucleus ESR1/KISS1 neurons, during lactation (at protein level).

The protein resides in the secreted. It is found in the cytoplasm. The protein localises to the cell junction. It localises to the gap junction. Immediate-early protein playing a role in various cellular processes including proliferation, adhesion, migration, differentiation and survival. Acts by binding to integrins or membrane receptors such as NOTCH1. Essential regulator of hematopoietic stem and progenitor cell function. Inhibits myogenic differentiation through the activation of Notch-signaling pathway. Inhibits vascular smooth muscle cells proliferation by increasing expression of cell-cycle regulators such as CDKN2B or CDKN1A independently of TGFB1 signaling. Ligand of integrins ITGAV:ITGB3 and ITGA5:ITGB1, acts directly upon endothelial cells to stimulate pro-angiogenic activities and induces angiogenesis. In endothelial cells, supports cell adhesion, induces directed cell migration (chemotaxis) and promotes cell survival. Also plays a role in cutaneous wound healing acting as integrin receptor ligand. Supports skin fibroblast adhesion through ITGA5:ITGB1 and ITGA6:ITGB1 and induces fibroblast chemotaxis through ITGAV:ITGB5. Seems to enhance bFGF-induced DNA synthesis in fibroblasts. Involved in bone regeneration as a negative regulator. Enhances the articular chondrocytic phenotype, whereas it repressed the one representing endochondral ossification. Impairs pancreatic beta-cell function, inhibits beta-cell proliferation and insulin secretion. Plays a role as negative regulator of endothelial pro-inflammatory activation reducing monocyte adhesion, its anti-inflammatory effects occur secondary to the inhibition of NF-kappaB signaling pathway. Contributes to the control and coordination of inflammatory processes in atherosclerosis. Attenuates inflammatory pain through regulation of IL1B- and TNF-induced MMP9, MMP2 and CCL2 expression. Inhibits MMP9 expression through ITGB1 engagement. Brain osteoanabolic hormone. During lactation, maintains the maternal skeleton and viability of offspring. In this context, may act on osteochondral skeletal stem cells. The sequence is that of CCN family member 3 (Ccn3) from Mus musculus (Mouse).